A 568-amino-acid polypeptide reads, in one-letter code: Type 3 secretion system secretin (568 aa).

The signal sequence occupies residues 1-15 (MAAALLLWTAGTVCA). The segment at 203-292 (YGGDGPSDSG…RGSTPIIRAD (90 aa)) is disordered. Residues 243–257 (LGGGKSPLPPGGTGQ) show a composition bias toward gly residues. Over residues 273–284 (NRLRSDELDDRG) the composition is skewed to basic and acidic residues.

This sequence belongs to the bacterial secretin family. T3SS SctC subfamily. As to quaternary structure, the core secretion machinery of the T3SS is composed of approximately 20 different proteins, including cytoplasmic components, a base, an export apparatus and a needle. This subunit is part of the base, which anchors the injectisome in the bacterial cell envelope. Forms a stable homooligomeric complex.

The protein resides in the cell outer membrane. In terms of biological role, component of the type III secretion system (T3SS), also called injectisome, which is used to inject bacterial effector proteins into eukaryotic host cells. Forms a ring-shaped multimeric structure with an apparent central pore in the outer membrane. The sequence is that of Type 3 secretion system secretin from Ralstonia nicotianae (strain ATCC BAA-1114 / GMI1000) (Ralstonia solanacearum).